The primary structure comprises 620 residues: 1-deoxy-D-xylulose-5-phosphate synthase (620 aa).

Residues His-80 and 121 to 123 (GHS) each bind thiamine diphosphate. Asp-152 serves as a coordination point for Mg(2+). Thiamine diphosphate contacts are provided by residues 153 to 154 (GA), Asn-181, Tyr-288, and Glu-370. A Mg(2+)-binding site is contributed by Asn-181.

It belongs to the transketolase family. DXPS subfamily. Homodimer. Mg(2+) serves as cofactor. Thiamine diphosphate is required as a cofactor.

It carries out the reaction D-glyceraldehyde 3-phosphate + pyruvate + H(+) = 1-deoxy-D-xylulose 5-phosphate + CO2. It participates in metabolic intermediate biosynthesis; 1-deoxy-D-xylulose 5-phosphate biosynthesis; 1-deoxy-D-xylulose 5-phosphate from D-glyceraldehyde 3-phosphate and pyruvate: step 1/1. Functionally, catalyzes the acyloin condensation reaction between C atoms 2 and 3 of pyruvate and glyceraldehyde 3-phosphate to yield 1-deoxy-D-xylulose-5-phosphate (DXP). The polypeptide is 1-deoxy-D-xylulose-5-phosphate synthase (Escherichia coli O7:K1 (strain IAI39 / ExPEC)).